The chain runs to 978 residues: Regulator of telomere elongation helicase 1 homolog (978 aa).

Residues 7-318 (NGIPVNFPFE…EDDDAKKDFT (312 aa)) form the Helicase ATP-binding domain. 42–49 (SPTGTGKT) contributes to the ATP binding site. Residues Cys-159, Cys-177, Cys-186, and Cys-222 each contribute to the [4Fe-4S] cluster site. The short motif at 265–268 (DEAH) is the DEAH box element.

This sequence belongs to the helicase family. RAD3/XPD subfamily.

It is found in the nucleus. The catalysed reaction is ATP + H2O = ADP + phosphate + H(+). In terms of biological role, a probable ATP-dependent DNA helicase implicated in DNA repair and the maintenance of genomic stability. Acts as an anti-recombinase to counteract toxic recombination and limit crossover during meiosis. Regulates meiotic recombination and crossover homeostasis by physically dissociating strand invasion events and thereby promotes noncrossover repair by meiotic synthesis dependent strand annealing (SDSA) as well as disassembly of D loop recombination intermediates. The polypeptide is Regulator of telomere elongation helicase 1 homolog (Culex quinquefasciatus (Southern house mosquito)).